Reading from the N-terminus, the 709-residue chain is Protein transport protein SEC39 (709 aa).

The protein belongs to the SEC39 family. As to quaternary structure, component of a peripheral membrane protein complex consisting of DSL1, SEC39/DSL3 and TIP20. Bound to a SNARE complex consisting of UFE1, USE1, SEC20 and SEC22 or YKT6 through direct interaction of TIP20 with SEC20. Interacts with TIP20 and DSL1.

It localises to the endoplasmic reticulum membrane. Its function is as follows. Required for protein transport between the Golgi and the endoplasmic reticulum. May contribute to tethering of coatomer-coated retrograde transport vesicles to the ER membrane through interaction with and stabilization of the SNARE complex. This is Protein transport protein SEC39 from Saccharomyces cerevisiae (strain ATCC 204508 / S288c) (Baker's yeast).